The chain runs to 247 residues: Tyrosine recombinase XerD-like (247 aa).

One can recognise a Core-binding (CB) domain in the interval 1–72 (MIKHIEAFLA…TVNQFLHYLY (72 aa)). The Tyr recombinase domain occupies 91 to 247 (STKVPFTYQL…PITLEKYYRL (157 aa)). The active site involves arginine 212. The O-(3'-phospho-DNA)-tyrosine intermediate role is filled by tyrosine 244.

Belongs to the 'phage' integrase family. XerD-like subfamily.

It localises to the cytoplasm. Its function is as follows. Putative tyrosine recombinase. Not involved in the cutting and rejoining of the recombining DNA molecules on dif(SL) site. In Streptococcus uberis (strain ATCC BAA-854 / 0140J), this protein is Tyrosine recombinase XerD-like.